Reading from the N-terminus, the 132-residue chain is Phosphomevalonate dehydratase small subunit (132 aa).

S61 acts as the Proton acceptor in catalysis.

It belongs to the AcnX type II small subunit family. As to quaternary structure, heterodimer composed of a large subunit (PMDh-L) and a small subunit (PMDh-S).

The enzyme catalyses (R)-5-phosphomevalonate = (2E)-3-methyl-5-phosphooxypent-2-enoate + H2O. The protein operates within isoprenoid biosynthesis; isopentenyl diphosphate biosynthesis via mevalonate pathway. Component of a hydro-lyase that catalyzes the dehydration of mevalonate 5-phosphate (MVA5P) to form trans-anhydromevalonate 5-phosphate (tAHMP). Involved in the archaeal mevalonate (MVA) pathway, which provides fundamental precursors for isoprenoid biosynthesis, such as isopentenyl diphosphate (IPP) and dimethylallyl diphosphate (DMAPP). In Archaeoglobus fulgidus (strain ATCC 49558 / DSM 4304 / JCM 9628 / NBRC 100126 / VC-16), this protein is Phosphomevalonate dehydratase small subunit.